The sequence spans 133 residues: MANHDPISDMLTRIRNASEKRHQTTRVPASRMSRSIAKVLQQEGFISEISEEGEGVRTHLVLELKYSGKHRHPTIRSMQRVSKPGLRIYKNTRALPKVLGGLGMAIISTSKGVMSDRDARKQGVGGEVLCYVY.

It belongs to the universal ribosomal protein uS8 family. In terms of assembly, part of the 30S ribosomal subunit. Contacts proteins S5 and S12.

One of the primary rRNA binding proteins, it binds directly to 16S rRNA central domain where it helps coordinate assembly of the platform of the 30S subunit. This is Small ribosomal subunit protein uS8 from Prochlorococcus marinus (strain MIT 9313).